The chain runs to 175 residues: Gamma-crystallin B (175 aa).

2 consecutive Beta/gamma crystallin 'Greek key' domains span residues 2-40 and 41-83; these read GKIT…RVES and GCWM…HLIP. Residues 84–88 are connecting peptide; the sequence is PHSGT. Beta/gamma crystallin 'Greek key' domains are found at residues 89 to 129 and 130 to 172; these read YRMK…NVLE and GSWI…RRVM.

It belongs to the beta/gamma-crystallin family. As to quaternary structure, monomer.

In terms of biological role, crystallins are the dominant structural components of the vertebrate eye lens. The protein is Gamma-crystallin B (CRYGB) of Macaca mulatta (Rhesus macaque).